Here is a 151-residue protein sequence, read N- to C-terminus: MKQIDLKILDKRIGTEFPLPTYATTGSAGLDLRALIEQPLTVEAGQTVLIPTGISVYIADPNLAAVILPRSGLGHKNGIVLGNLIGLIDSDYQGPLMVSLWNRSDKPFTVEVGDRIAQLVFVPVVQAQFNIVEEFTATDRGEGGFGHSGKQ.

Substrate is bound by residues 70–72 (RSG), N83, 87–89 (LID), and M97.

This sequence belongs to the dUTPase family. It depends on Mg(2+) as a cofactor.

It carries out the reaction dUTP + H2O = dUMP + diphosphate + H(+). The protein operates within pyrimidine metabolism; dUMP biosynthesis; dUMP from dCTP (dUTP route): step 2/2. Functionally, this enzyme is involved in nucleotide metabolism: it produces dUMP, the immediate precursor of thymidine nucleotides and it decreases the intracellular concentration of dUTP so that uracil cannot be incorporated into DNA. This chain is Deoxyuridine 5'-triphosphate nucleotidohydrolase, found in Glaesserella parasuis serovar 5 (strain SH0165) (Haemophilus parasuis).